The following is a 458-amino-acid chain: Transcription factor verZ (458 aa).

Positions 117-144 form a DNA-binding region, zn(2)-C6 fungal-type; that stretch reads CDRCQAAKVKCGHEKPSCRRCTYHKVEC. Disordered stretches follow at residues 153–256 and 435–458; these read GRPR…MQSM and MEEEDDPCSEIKLNPNRLRLEDGK. 3 stretches are compositionally biased toward polar residues: residues 167-186, 193-207, and 223-235; these read PSPQGSINGASDENSRSKSA, FTGTEPITEARQSPV, and RAEPWTPSLTTNF.

The protein resides in the nucleus. In terms of biological role, transcription factor; part of the gene cluster that mediates the biosynthesis of 11'-deoxyverticillin A, one of the dimeric epipolythiodioxopiperazines (ETPs) from the verticillin family that act as mycotoxins. 11'-deoxyverticillin A is required for normal conidiation. Directly binds the consensus motif 5'-(T/C)(C/A)(G/T)GN3CC(G/T)(A/G)(G/C)-3' localized in the upstream regions of the verticillin biosynthetic genes. This is Transcription factor verZ from Clonostachys rogersoniana.